Consider the following 100-residue polypeptide: MAKKSLIYREKKRQKLEKKYHLIRRSLKKEISQIPSLSEKWKIHGKLQSPPRNSAPTRLHRRCFSTGRPRANYRDFGLSGHILREMVQACLLPGATRASW.

The protein belongs to the universal ribosomal protein uS14 family. In terms of assembly, part of the 30S ribosomal subunit.

The protein resides in the plastid. It is found in the chloroplast. Functionally, binds 16S rRNA, required for the assembly of 30S particles. This chain is Small ribosomal subunit protein uS14c, found in Barbarea verna (Land cress).